The primary structure comprises 204 residues: Large ribosomal subunit protein uL4 (204 aa).

The tract at residues 47-69 is disordered; it reads KAQKTRAEVSGGGKKPWRQKGTG.

Belongs to the universal ribosomal protein uL4 family. In terms of assembly, part of the 50S ribosomal subunit.

Its function is as follows. One of the primary rRNA binding proteins, this protein initially binds near the 5'-end of the 23S rRNA. It is important during the early stages of 50S assembly. It makes multiple contacts with different domains of the 23S rRNA in the assembled 50S subunit and ribosome. Functionally, forms part of the polypeptide exit tunnel. This is Large ribosomal subunit protein uL4 from Cellvibrio japonicus (strain Ueda107) (Pseudomonas fluorescens subsp. cellulosa).